The primary structure comprises 609 residues: Adagio protein 1 (609 aa).

The segment covering 1–17 (MEWDSGSDLSADDASSL) has biased composition (low complexity). Residues 1 to 24 (MEWDSGSDLSADDASSLADDEEGG) are disordered. One can recognise a PAS domain in the interval 32-114 (IPYPVGNLLH…SEIRKCIDEG (83 aa)). The residue at position 82 (C82) is an S-4a-FMN cysteine. The 44-residue stretch at 118 to 161 (QGELLNFRKDGSPLMNRLRLTPIYGDDDTITHIIGIQFFIETDI) folds into the PAC domain. Positions 195 to 241 (CGLFQLSDEVVSMKILSRLTPRDVASVSSVCRRLYVLTKNEDLWRRV) constitute an F-box domain. Kelch repeat units lie at residues 292–342 (SRCN…SSPP), 345–392 (RWGH…SGLA), 397–445 (RSWH…PAAW), 450–501 (RLGH…TGSG), and 516–564 (RLDH…NIPG).

It belongs to the ADAGIO family. As to quaternary structure, interacts with NFXL2. Interacts (via N-terminus) with GI and (via Kelch repeats) with ADO3. Component of an E3 ubiquitin ligase SCF(ADO1) complex composed of SKP1A/ASK1 (or SKP1B/ASK2), CUL1, RBX1 and ADO1. Also interacts with SKP1D/ASK4, SKP1K/ASK11, CRY1, PHYB, APRR1 and APRR5, and probably with SKP1N/ASK14 and SKP1S/ASK19. In terms of processing, may be ubiquitinated. Degraded in a proteasome-dependent manner. Post-translationally, FMN binds covalently to cysteine after exposure to blue light and is reversed in the dark. In terms of tissue distribution, ubiquitously expressed with higher levels in cotyledons and leaves.

It localises to the nucleus. The protein localises to the cytoplasm. The protein operates within protein modification; protein ubiquitination. In terms of biological role, component of an E3 ubiquitin ligase complex that plays a central role in blue light-dependent circadian cycles. Acts as a blue light photoreceptor, due to the presence of FMN, that mediates light-regulated protein degradation of critical clock components by targeting them to the proteasome complex. The SCF(ADO1) E3 ubiquitin ligase complex is involved in the regulation of circadian clock-dependent processes including the transition to flowering time, hypocotyl elongation, cotyledons and leaf movement rhythms. APRR1/TOC1 and APRR5, but not 'GIGANTEA', are proteolytic substrates of this ubiquitin ligase complex. Blue light enhances cooperative stabilization of 'GIGANTEA' and ADO1/ZTL, leading to amplification and sharpening of the expression profile of APRR1/TOC1. ADO1/ZTL interacts with ADO3, preventing the interaction of ADO3 with CDF1. The sequence is that of Adagio protein 1 (ADO1) from Arabidopsis thaliana (Mouse-ear cress).